The primary structure comprises 288 residues: Cell division protein DivIB (288 aa).

The Cytoplasmic portion of the chain corresponds to 1–25; that stretch reads MEKVIDITERVPAMKKRRRRRTNFK. The helical transmembrane segment at 26–46 threads the bilayer; that stretch reads FLALVTIFLFIIIILLYFQLP. At 47–288 the chain is on the extracellular side; that stretch reads YSDIKKIDIK…LEEQNEEEPE (242 aa). The 69-residue stretch at 48 to 116 folds into the POTRA domain; sequence SDIKKIDIKG…NEVQITVEEW (69 aa). A compositionally biased stretch (basic and acidic residues) spans 253 to 263; it reads LIKENTEKTEE. Residues 253 to 288 form a disordered region; the sequence is LIKENTEKTEEPAEETENADTEEGGQLEEQNEEEPE. Over residues 264–288 the composition is skewed to acidic residues; the sequence is PAEETENADTEEGGQLEEQNEEEPE.

It belongs to the FtsQ/DivIB family. DivIB subfamily.

It localises to the cell membrane. Its function is as follows. Cell division protein that may be involved in stabilizing or promoting the assembly of the division complex. The sequence is that of Cell division protein DivIB from Solibacillus silvestris (strain StLB046) (Bacillus silvestris).